Here is a 188-residue protein sequence, read N- to C-terminus: 3-deoxy-D-manno-octulosonate 8-phosphate phosphatase KdsC (188 aa).

2 residues coordinate Mg(2+): D32 and D34. Substrate-binding positions include D34, 55–59 (NVRDG), R63, R78, R86, and K102. D125 is a Mg(2+) binding site.

In terms of assembly, homotetramer. Mg(2+) is required as a cofactor. The cofactor is Co(2+).

The catalysed reaction is 3-deoxy-alpha-D-manno-2-octulosonate-8-phosphate + H2O = 3-deoxy-alpha-D-manno-oct-2-ulosonate + phosphate. Its pathway is carbohydrate biosynthesis; 3-deoxy-D-manno-octulosonate biosynthesis; 3-deoxy-D-manno-octulosonate from D-ribulose 5-phosphate: step 3/3. It participates in bacterial outer membrane biogenesis; lipopolysaccharide biosynthesis. Its activity is regulated as follows. Inhibited by calcium, cadmium, mercury, and copper ions. Catalyzes the hydrolysis of 3-deoxy-D-manno-octulosonate 8-phosphate (KDO 8-P) to 3-deoxy-D-manno-octulosonate (KDO) and inorganic phosphate. This Escherichia coli (strain B / BL21-DE3) protein is 3-deoxy-D-manno-octulosonate 8-phosphate phosphatase KdsC.